We begin with the raw amino-acid sequence, 953 residues long: Isoleucine--tRNA ligase (953 aa).

Positions 57-67 (PYANGDIHIGH) match the 'HIGH' region motif. Glu582 serves as a coordination point for L-isoleucyl-5'-AMP. A 'KMSKS' region motif is present at residues 623 to 627 (KMSKS). Lys626 contributes to the ATP binding site. 4 residues coordinate Zn(2+): Cys916, Cys919, Cys936, and Cys939.

Belongs to the class-I aminoacyl-tRNA synthetase family. IleS type 1 subfamily. In terms of assembly, monomer. Zn(2+) is required as a cofactor.

Its subcellular location is the cytoplasm. The catalysed reaction is tRNA(Ile) + L-isoleucine + ATP = L-isoleucyl-tRNA(Ile) + AMP + diphosphate. Its function is as follows. Catalyzes the attachment of isoleucine to tRNA(Ile). As IleRS can inadvertently accommodate and process structurally similar amino acids such as valine, to avoid such errors it has two additional distinct tRNA(Ile)-dependent editing activities. One activity is designated as 'pretransfer' editing and involves the hydrolysis of activated Val-AMP. The other activity is designated 'posttransfer' editing and involves deacylation of mischarged Val-tRNA(Ile). The sequence is that of Isoleucine--tRNA ligase from Bordetella avium (strain 197N).